Here is a 1048-residue protein sequence, read N- to C-terminus: Putative helicase/primase complex protein (1048 aa).

The segment at 1025-1048 is disordered; sequence STKEESSPTREETSSIKEKTFTET.

Belongs to the asfivirus F1055L family.

Functionally, may be involved in DNA replication. The polypeptide is Putative helicase/primase complex protein (African swine fever virus (isolate Pig/Kenya/KEN-50/1950) (ASFV)).